We begin with the raw amino-acid sequence, 361 residues long: Phosphate acyltransferase (361 aa).

A disordered region spans residues Val340–Thr361.

Belongs to the PlsX family. As to quaternary structure, homodimer. Probably interacts with PlsY.

The protein resides in the cytoplasm. It catalyses the reaction a fatty acyl-[ACP] + phosphate = an acyl phosphate + holo-[ACP]. It functions in the pathway lipid metabolism; phospholipid metabolism. Its function is as follows. Catalyzes the reversible formation of acyl-phosphate (acyl-PO(4)) from acyl-[acyl-carrier-protein] (acyl-ACP). This enzyme utilizes acyl-ACP as fatty acyl donor, but not acyl-CoA. The sequence is that of Phosphate acyltransferase from Anaeromyxobacter dehalogenans (strain 2CP-1 / ATCC BAA-258).